The primary structure comprises 140 residues: Coiled-coil domain-containing protein 126 (140 aa).

Residues 1 to 26 (MFFTISRKNMSQKLSLLLLVFGLIWG) form the signal peptide. N-linked (GlcNAc...) asparagine glycosylation is found at N110 and N134. A disordered region spans residues 120–140 (TSGNLVPVTTNKRTNVSGSIR).

The protein localises to the secreted. This chain is Coiled-coil domain-containing protein 126 (CCDC126), found in Homo sapiens (Human).